A 230-amino-acid polypeptide reads, in one-letter code: MSKYAAAPSPYSHQPQTPEHKSKTLVVGLTGGIGSGKSAASDWFAQQGIDIIDADVIAHEVVVKGSSTLRKIQRKFGDWVLNANGDMDRAAVRTHVFTYPDALIELEAITHPAIREAAKKQLAESTSPYVVLSAPLLIEAAEAGLANLCQRILVMDATENTQLARASQRDALSVQKIEAIMVNQLSREERNRHADDVVLNESDLAALYVQLEPLHQDYLKLAQQLKFAAD.

Residues 1–21 form a disordered region; it reads MSKYAAAPSPYSHQPQTPEHK. The region spanning 26–225 is the DPCK domain; sequence VVGLTGGIGS…QDYLKLAQQL (200 aa). 34–39 is a binding site for ATP; it reads GSGKSA.

Belongs to the CoaE family.

Its subcellular location is the cytoplasm. It catalyses the reaction 3'-dephospho-CoA + ATP = ADP + CoA + H(+). It functions in the pathway cofactor biosynthesis; coenzyme A biosynthesis; CoA from (R)-pantothenate: step 5/5. In terms of biological role, catalyzes the phosphorylation of the 3'-hydroxyl group of dephosphocoenzyme A to form coenzyme A. This chain is Dephospho-CoA kinase, found in Psychrobacter cryohalolentis (strain ATCC BAA-1226 / DSM 17306 / VKM B-2378 / K5).